A 436-amino-acid polypeptide reads, in one-letter code: Trigger factor (436 aa).

Residues 163–248 (GDRVTVDFEG…VKKIEAAHLP (86 aa)) form the PPIase FKBP-type domain.

It belongs to the FKBP-type PPIase family. Tig subfamily.

The protein localises to the cytoplasm. The enzyme catalyses [protein]-peptidylproline (omega=180) = [protein]-peptidylproline (omega=0). Functionally, involved in protein export. Acts as a chaperone by maintaining the newly synthesized protein in an open conformation. Functions as a peptidyl-prolyl cis-trans isomerase. In Paracidovorax citrulli (strain AAC00-1) (Acidovorax citrulli), this protein is Trigger factor.